The primary structure comprises 509 residues: Histidine ammonia-lyase (509 aa).

The 5-imidazolinone (Ala-Gly) cross-link spans alanine 144–glycine 146. Serine 145 carries the 2,3-didehydroalanine (Ser) modification.

Belongs to the PAL/histidase family. In terms of processing, contains an active site 4-methylidene-imidazol-5-one (MIO), which is formed autocatalytically by cyclization and dehydration of residues Ala-Ser-Gly.

The protein resides in the cytoplasm. The enzyme catalyses L-histidine = trans-urocanate + NH4(+). Its pathway is amino-acid degradation; L-histidine degradation into L-glutamate; N-formimidoyl-L-glutamate from L-histidine: step 1/3. This Rhodospirillum centenum (strain ATCC 51521 / SW) protein is Histidine ammonia-lyase.